A 365-amino-acid chain; its full sequence is 1-deoxy-D-xylulose 5-phosphate reductoisomerase (365 aa).

NADPH-binding residues include T7, G8, S9, I10, A31, K32, N33, and N114. Position 115 (K115) interacts with 1-deoxy-D-xylulose 5-phosphate. E116 contributes to the NADPH binding site. Residue D134 participates in Mn(2+) binding. 1-deoxy-D-xylulose 5-phosphate is bound by residues S135, E136, S158, and H181. E136 provides a ligand contact to Mn(2+). G187 is an NADPH binding site. Positions 194, 199, 200, and 203 each coordinate 1-deoxy-D-xylulose 5-phosphate. A Mn(2+)-binding site is contributed by E203.

The protein belongs to the DXR family. Requires Mg(2+) as cofactor. Mn(2+) serves as cofactor.

The enzyme catalyses 2-C-methyl-D-erythritol 4-phosphate + NADP(+) = 1-deoxy-D-xylulose 5-phosphate + NADPH + H(+). It participates in isoprenoid biosynthesis; isopentenyl diphosphate biosynthesis via DXP pathway; isopentenyl diphosphate from 1-deoxy-D-xylulose 5-phosphate: step 1/6. Its function is as follows. Catalyzes the NADPH-dependent rearrangement and reduction of 1-deoxy-D-xylulose-5-phosphate (DXP) to 2-C-methyl-D-erythritol 4-phosphate (MEP). The protein is 1-deoxy-D-xylulose 5-phosphate reductoisomerase of Campylobacter curvus (strain 525.92).